The chain runs to 87 residues: Small ribosomal subunit protein bS20 (87 aa).

Over residues 1–11 (MANIKSAKKRA) the composition is skewed to basic residues. Residues 1–26 (MANIKSAKKRAVQSEKRRQHNASQRS) are disordered.

The protein belongs to the bacterial ribosomal protein bS20 family.

In terms of biological role, binds directly to 16S ribosomal RNA. This Actinobacillus pleuropneumoniae serotype 5b (strain L20) protein is Small ribosomal subunit protein bS20.